The sequence spans 423 residues: Gamma-glutamyl phosphate reductase (423 aa).

The protein belongs to the gamma-glutamyl phosphate reductase family.

It localises to the cytoplasm. The enzyme catalyses L-glutamate 5-semialdehyde + phosphate + NADP(+) = L-glutamyl 5-phosphate + NADPH + H(+). Its pathway is amino-acid biosynthesis; L-proline biosynthesis; L-glutamate 5-semialdehyde from L-glutamate: step 2/2. In terms of biological role, catalyzes the NADPH-dependent reduction of L-glutamate 5-phosphate into L-glutamate 5-semialdehyde and phosphate. The product spontaneously undergoes cyclization to form 1-pyrroline-5-carboxylate. This Burkholderia lata (strain ATCC 17760 / DSM 23089 / LMG 22485 / NCIMB 9086 / R18194 / 383) protein is Gamma-glutamyl phosphate reductase.